Consider the following 1342-residue polypeptide: DNA-directed RNA polymerase subunit beta (1342 aa).

The protein belongs to the RNA polymerase beta chain family. The RNAP catalytic core consists of 2 alpha, 1 beta, 1 beta' and 1 omega subunit. When a sigma factor is associated with the core the holoenzyme is formed, which can initiate transcription.

It carries out the reaction RNA(n) + a ribonucleoside 5'-triphosphate = RNA(n+1) + diphosphate. Functionally, DNA-dependent RNA polymerase catalyzes the transcription of DNA into RNA using the four ribonucleoside triphosphates as substrates. The protein is DNA-directed RNA polymerase subunit beta of Histophilus somni (strain 2336) (Haemophilus somnus).